We begin with the raw amino-acid sequence, 89 residues long: Small ribosomal subunit protein uS15 (89 aa).

Basic and acidic residues predominate over residues 1–18 (MALSAQEKDAIVKEHQTS). The tract at residues 1-25 (MALSAQEKDAIVKEHQTSETDTGSP) is disordered.

It belongs to the universal ribosomal protein uS15 family. In terms of assembly, part of the 30S ribosomal subunit. Forms a bridge to the 50S subunit in the 70S ribosome, contacting the 23S rRNA.

Its function is as follows. One of the primary rRNA binding proteins, it binds directly to 16S rRNA where it helps nucleate assembly of the platform of the 30S subunit by binding and bridging several RNA helices of the 16S rRNA. Forms an intersubunit bridge (bridge B4) with the 23S rRNA of the 50S subunit in the ribosome. The sequence is that of Small ribosomal subunit protein uS15 from Teredinibacter turnerae (strain ATCC 39867 / T7901).